A 365-amino-acid chain; its full sequence is Peptide chain release factor 2 (365 aa).

An N5-methylglutamine modification is found at Gln-252.

Belongs to the prokaryotic/mitochondrial release factor family. Post-translationally, methylated by PrmC. Methylation increases the termination efficiency of RF2.

Its subcellular location is the cytoplasm. Its function is as follows. Peptide chain release factor 2 directs the termination of translation in response to the peptide chain termination codons UGA and UAA. In Pasteurella multocida (strain Pm70), this protein is Peptide chain release factor 2.